The sequence spans 212 residues: Uracil phosphoribosyltransferase (212 aa).

Residues Arg78, Arg103, and 130–138 (DPMLATGGS) contribute to the 5-phospho-alpha-D-ribose 1-diphosphate site. Uracil contacts are provided by residues Ile193 and 198–200 (GDA). Asp199 lines the 5-phospho-alpha-D-ribose 1-diphosphate pocket.

It belongs to the UPRTase family. Mg(2+) is required as a cofactor.

The enzyme catalyses UMP + diphosphate = 5-phospho-alpha-D-ribose 1-diphosphate + uracil. It functions in the pathway pyrimidine metabolism; UMP biosynthesis via salvage pathway; UMP from uracil: step 1/1. Allosterically activated by GTP. Functionally, catalyzes the conversion of uracil and 5-phospho-alpha-D-ribose 1-diphosphate (PRPP) to UMP and diphosphate. The protein is Uracil phosphoribosyltransferase of Stutzerimonas stutzeri (strain A1501) (Pseudomonas stutzeri).